We begin with the raw amino-acid sequence, 258 residues long: Trypsin (258 aa).

A signal peptide spans 1–16 (MIRFTLALAVIGVTFA). Positions 17–29 (ASTPQIETNPNLE) are cleaved as a propeptide — activation peptide. Residues 30-257 (IIGGHDANII…FRDWINEETE (228 aa)) form the Peptidase S1 domain. A disulfide bridge connects residues Cys-55 and Cys-71. His-70 (charge relay system) is an active-site residue. The N-linked (GlcNAc...) asparagine glycan is linked to Asn-110. Residue Asp-117 is the Charge relay system of the active site. N-linked (GlcNAc...) asparagine glycosylation is found at Asn-130 and Asn-188. Disulfide bonds link Cys-182–Cys-197 and Cys-209–Cys-233. Ser-213 (charge relay system) is an active-site residue.

The protein belongs to the peptidase S1 family. In terms of tissue distribution, expressed in larval carcasses and gut, and adult gut.

Its subcellular location is the secreted. It catalyses the reaction Preferential cleavage: Arg-|-Xaa, Lys-|-Xaa.. The protein is Trypsin of Phaedon cochleariae (Mustard beetle).